The sequence spans 378 residues: Alcohol dehydrogenase (378 aa).

Fe cation is bound by residues D195, H199, H262, and H274.

It belongs to the iron-containing alcohol dehydrogenase family. It depends on Fe(2+) as a cofactor. Requires Mn(2+) as cofactor.

It catalyses the reaction a primary alcohol + NAD(+) = an aldehyde + NADH + H(+). The catalysed reaction is butan-1-ol + NAD(+) = butanal + NADH + H(+). The enzyme catalyses hexan-1-ol + NAD(+) = hexanal + NADH + H(+). It carries out the reaction ethanol + NAD(+) = acetaldehyde + NADH + H(+). Its function is as follows. Thermostable type III alcohol dehydrogenase. For oxidation activity, the best substrates are 1-butanol and 1-hexanol, followed by ethanol. Shows lower activity with ethylene glycol, isopentanol, isopropanol and glycerol. Displays higher reduction activity in the presence of butanal, followed by acetaldehyde. Has lower activity with hexanal and acetone. The sequence is that of Alcohol dehydrogenase from Thermococcus barophilus.